We begin with the raw amino-acid sequence, 354 residues long: Pyruvate dehydrogenase E1 component subunit alpha (354 aa).

The tract at residues 1-29 (MAKATQDSNRPHKADVGSAIPNHDLPPIP) is disordered.

In terms of assembly, heterodimer of an alpha and a beta chain. Requires thiamine diphosphate as cofactor.

The catalysed reaction is N(6)-[(R)-lipoyl]-L-lysyl-[protein] + pyruvate + H(+) = N(6)-[(R)-S(8)-acetyldihydrolipoyl]-L-lysyl-[protein] + CO2. Its function is as follows. The pyruvate dehydrogenase complex catalyzes the overall conversion of pyruvate to acetyl-CoA and CO(2). It contains multiple copies of three enzymatic components: pyruvate dehydrogenase (E1), dihydrolipoamide acetyltransferase (E2) and lipoamide dehydrogenase (E3). This chain is Pyruvate dehydrogenase E1 component subunit alpha (pdhA), found in Zymomonas mobilis subsp. mobilis (strain ATCC 31821 / ZM4 / CP4).